A 63-amino-acid chain; its full sequence is Small ribosomal subunit protein bS21 (63 aa).

This sequence belongs to the bacterial ribosomal protein bS21 family.

The protein is Small ribosomal subunit protein bS21 of Porphyromonas gingivalis (strain ATCC 33277 / DSM 20709 / CIP 103683 / JCM 12257 / NCTC 11834 / 2561).